A 202-amino-acid polypeptide reads, in one-letter code: Large ribosomal subunit protein bL25 (202 aa).

This sequence belongs to the bacterial ribosomal protein bL25 family. CTC subfamily. In terms of assembly, part of the 50S ribosomal subunit; part of the 5S rRNA/L5/L18/L25 subcomplex. Contacts the 5S rRNA. Binds to the 5S rRNA independently of L5 and L18.

In terms of biological role, this is one of the proteins that binds to the 5S RNA in the ribosome where it forms part of the central protuberance. The protein is Large ribosomal subunit protein bL25 of Chlorobium luteolum (strain DSM 273 / BCRC 81028 / 2530) (Pelodictyon luteolum).